The chain runs to 325 residues: MSKRIYSRIAGTGSYLPEKVLTNDDMSKIVDTSDEWIFSRTGIRERHIVADDQTTSDLAYFASLRAMEAAGVTADEIDLIVIGTTTPDLIFPSTACLLQARLGNIGCGAMDVNAACSGFVYALSVADKFVRSGDAKTVLVVGAETLTRIVDWTDRTTCVLFGDGAGAVILKADEETGILSTHLHADGSKKELLWDPVGVSVGFGEGKNGGGALLMKGNDVFKYAVKALDSVVDETLAASGYDKHDLDWLIPHQANLRIIEATAKRMELPMEQVVVTVDRHGNTSSASVPLALDEAVRSGRVQRGQLLLLEAFGGGFTWGSALLRY.

Active-site residues include cysteine 116 and histidine 252. The tract at residues 253–257 (QANLR) is ACP-binding. Asparagine 282 is an active-site residue.

The protein belongs to the thiolase-like superfamily. FabH family. In terms of assembly, homodimer.

The protein localises to the cytoplasm. It carries out the reaction malonyl-[ACP] + acetyl-CoA + H(+) = 3-oxobutanoyl-[ACP] + CO2 + CoA. It functions in the pathway lipid metabolism; fatty acid biosynthesis. Functionally, catalyzes the condensation reaction of fatty acid synthesis by the addition to an acyl acceptor of two carbons from malonyl-ACP. Catalyzes the first condensation reaction which initiates fatty acid synthesis and may therefore play a role in governing the total rate of fatty acid production. Possesses both acetoacetyl-ACP synthase and acetyl transacylase activities. Its substrate specificity determines the biosynthesis of branched-chain and/or straight-chain of fatty acids. This is Beta-ketoacyl-[acyl-carrier-protein] synthase III from Xanthomonas axonopodis pv. citri (strain 306).